Here is a 522-residue protein sequence, read N- to C-terminus: Flavin-dependent halogenase armH1 (522 aa).

FAD is bound by residues G16, A19, and E49. Positions 328 and 329 each coordinate chloride. Residue I330 coordinates FAD.

Belongs to the flavin-dependent halogenase family.

It carries out the reaction melleolide F + FADH2 + chloride + O2 = 6'-chloromelleolide F + FAD + 2 H2O + H(+). In terms of biological role, flavin-dependent halogenase involved in the biosynthesis of melleolides, a range of antifungal and phytotoxic polyketide derivatives composed of an orsellinic acid (OA) moiety esterified to various sesquiterpene alcohols. The halogenase catalyzes the transfer of a single chlorine atom to the melleolide backbone, resulting in a 6'-chloromelleolide product. The enzyme acts on free substrate and does not depend on carrier-protein-dependent acceptor molecules. In Armillaria mellea (Honey mushroom), this protein is Flavin-dependent halogenase armH1.